We begin with the raw amino-acid sequence, 430 residues long: Adenylosuccinate synthetase (430 aa).

GTP is bound by residues 12–18 (GDEGKGK) and 40–42 (GHT). Aspartate 13 serves as the catalytic Proton acceptor. Aspartate 13 and glycine 40 together coordinate Mg(2+). IMP is bound by residues 13–16 (DEGK), 38–41 (NAGH), threonine 129, arginine 143, glutamine 223, threonine 238, and arginine 302. Histidine 41 serves as the catalytic Proton donor. 298–304 (TTTGRPR) provides a ligand contact to substrate. GTP is bound by residues arginine 304, 330–332 (KLD), and 412–414 (SVG).

Belongs to the adenylosuccinate synthetase family. As to quaternary structure, homodimer. Requires Mg(2+) as cofactor.

It localises to the cytoplasm. The enzyme catalyses IMP + L-aspartate + GTP = N(6)-(1,2-dicarboxyethyl)-AMP + GDP + phosphate + 2 H(+). Its pathway is purine metabolism; AMP biosynthesis via de novo pathway; AMP from IMP: step 1/2. Plays an important role in the de novo pathway of purine nucleotide biosynthesis. Catalyzes the first committed step in the biosynthesis of AMP from IMP. In Desulforudis audaxviator (strain MP104C), this protein is Adenylosuccinate synthetase.